The following is a 159-amino-acid chain: ATP synthase subunit b (159 aa).

The helical transmembrane segment at 4-24 threads the bilayer; the sequence is VGINGTLIVQLVTFVILVALL.

This sequence belongs to the ATPase B chain family. As to quaternary structure, F-type ATPases have 2 components, F(1) - the catalytic core - and F(0) - the membrane proton channel. F(1) has five subunits: alpha(3), beta(3), gamma(1), delta(1), epsilon(1). F(0) has three main subunits: a(1), b(2) and c(10-14). The alpha and beta chains form an alternating ring which encloses part of the gamma chain. F(1) is attached to F(0) by a central stalk formed by the gamma and epsilon chains, while a peripheral stalk is formed by the delta and b chains.

It localises to the cell inner membrane. F(1)F(0) ATP synthase produces ATP from ADP in the presence of a proton or sodium gradient. F-type ATPases consist of two structural domains, F(1) containing the extramembraneous catalytic core and F(0) containing the membrane proton channel, linked together by a central stalk and a peripheral stalk. During catalysis, ATP synthesis in the catalytic domain of F(1) is coupled via a rotary mechanism of the central stalk subunits to proton translocation. In terms of biological role, component of the F(0) channel, it forms part of the peripheral stalk, linking F(1) to F(0). This is ATP synthase subunit b from Acidithiobacillus ferrooxidans (strain ATCC 23270 / DSM 14882 / CIP 104768 / NCIMB 8455) (Ferrobacillus ferrooxidans (strain ATCC 23270)).